We begin with the raw amino-acid sequence, 582 residues long: Potassium-transporting ATPase potassium-binding subunit (582 aa).

Transmembrane regions (helical) follow at residues 6 to 26 (LVQL…LGLY), 65 to 85 (IYAL…YVLE), 87 to 107 (LQGG…FVAV), 136 to 156 (GLAV…VALI), 178 to 198 (VLYI…WQGV), 277 to 297 (LEML…GVMI), 304 to 324 (LAIL…TLAA), 402 to 422 (GLYG…LMVG), 441 to 461 (ALVI…AAVI), 505 to 525 (IAGA…VLAL), and 546 to 566 (GGIF…LTFV).

Belongs to the KdpA family. The system is composed of three essential subunits: KdpA, KdpB and KdpC.

The protein resides in the cell inner membrane. In terms of biological role, part of the high-affinity ATP-driven potassium transport (or Kdp) system, which catalyzes the hydrolysis of ATP coupled with the electrogenic transport of potassium into the cytoplasm. This subunit binds the periplasmic potassium ions and delivers the ions to the membrane domain of KdpB through an intramembrane tunnel. The chain is Potassium-transporting ATPase potassium-binding subunit from Solidesulfovibrio magneticus (strain ATCC 700980 / DSM 13731 / RS-1) (Desulfovibrio magneticus).